The primary structure comprises 57 residues: Protein SinI (57 aa).

The Sin domain maps to Lys-2–Lys-40.

Heterodimer with SinR.

In terms of biological role, acts as an antagonist to SinR. SinI prevents SinR from binding to its target sequence on the gene for AprE. The protein is Protein SinI (sinI) of Bacillus subtilis (strain 168).